Consider the following 376-residue polypeptide: Putative glutamate--cysteine ligase 2 (376 aa).

It belongs to the glutamate--cysteine ligase type 2 family. YbdK subfamily.

It carries out the reaction L-cysteine + L-glutamate + ATP = gamma-L-glutamyl-L-cysteine + ADP + phosphate + H(+). ATP-dependent carboxylate-amine ligase which exhibits weak glutamate--cysteine ligase activity. The polypeptide is Putative glutamate--cysteine ligase 2 (Corynebacterium glutamicum (strain R)).